We begin with the raw amino-acid sequence, 228 residues long: Large ribosomal subunit protein bL25 (228 aa).

Residues 196-228 (EEAAVAEAQSAESAEGKAEAEAEATNEKNKSEA) are disordered. Over residues 209 to 228 (AEGKAEAEAEATNEKNKSEA) the composition is skewed to basic and acidic residues.

The protein belongs to the bacterial ribosomal protein bL25 family. CTC subfamily. In terms of assembly, part of the 50S ribosomal subunit; part of the 5S rRNA/L5/L18/L25 subcomplex. Contacts the 5S rRNA. Binds to the 5S rRNA independently of L5 and L18.

Functionally, this is one of the proteins that binds to the 5S RNA in the ribosome where it forms part of the central protuberance. In Methylorubrum extorquens (strain PA1) (Methylobacterium extorquens), this protein is Large ribosomal subunit protein bL25.